The chain runs to 272 residues: 3-methyl-2-oxobutanoate hydroxymethyltransferase (272 aa).

Residues aspartate 43 and aspartate 82 each contribute to the Mg(2+) site. 3-methyl-2-oxobutanoate-binding positions include 43-44, aspartate 82, and lysine 112; that span reads DS. Glutamate 114 serves as a coordination point for Mg(2+). Glutamate 179 acts as the Proton acceptor in catalysis.

It belongs to the PanB family. In terms of assembly, homodecamer; pentamer of dimers. Requires Mg(2+) as cofactor.

It localises to the cytoplasm. It catalyses the reaction 3-methyl-2-oxobutanoate + (6R)-5,10-methylene-5,6,7,8-tetrahydrofolate + H2O = 2-dehydropantoate + (6S)-5,6,7,8-tetrahydrofolate. It functions in the pathway cofactor biosynthesis; (R)-pantothenate biosynthesis; (R)-pantoate from 3-methyl-2-oxobutanoate: step 1/2. Catalyzes the reversible reaction in which hydroxymethyl group from 5,10-methylenetetrahydrofolate is transferred onto alpha-ketoisovalerate to form ketopantoate. This Staphylococcus aureus (strain MRSA252) protein is 3-methyl-2-oxobutanoate hydroxymethyltransferase.